The sequence spans 320 residues: uncharacterized protein (320 aa).

This sequence to S.pombe SpAC23H3.12c.

This is an uncharacterized protein from Saccharomyces cerevisiae (strain ATCC 204508 / S288c) (Baker's yeast).